A 448-amino-acid polypeptide reads, in one-letter code: tRNA(Ile)-lysidine synthase (448 aa).

30-35 (GGGADS) is an ATP binding site.

It belongs to the tRNA(Ile)-lysidine synthase family.

Its subcellular location is the cytoplasm. It catalyses the reaction cytidine(34) in tRNA(Ile2) + L-lysine + ATP = lysidine(34) in tRNA(Ile2) + AMP + diphosphate + H(+). In terms of biological role, ligates lysine onto the cytidine present at position 34 of the AUA codon-specific tRNA(Ile) that contains the anticodon CAU, in an ATP-dependent manner. Cytidine is converted to lysidine, thus changing the amino acid specificity of the tRNA from methionine to isoleucine. This Idiomarina loihiensis (strain ATCC BAA-735 / DSM 15497 / L2-TR) protein is tRNA(Ile)-lysidine synthase.